The chain runs to 497 residues: Guanosine-5'-triphosphate,3'-diphosphate pyrophosphatase (497 aa).

Belongs to the GppA/Ppx family. GppA subfamily.

The enzyme catalyses guanosine 3'-diphosphate 5'-triphosphate + H2O = guanosine 3',5'-bis(diphosphate) + phosphate + H(+). The protein operates within purine metabolism; ppGpp biosynthesis; ppGpp from GTP: step 2/2. In terms of biological role, catalyzes the conversion of pppGpp to ppGpp. Guanosine pentaphosphate (pppGpp) is a cytoplasmic signaling molecule which together with ppGpp controls the 'stringent response', an adaptive process that allows bacteria to respond to amino acid starvation, resulting in the coordinated regulation of numerous cellular activities. This Vibrio parahaemolyticus serotype O3:K6 (strain RIMD 2210633) protein is Guanosine-5'-triphosphate,3'-diphosphate pyrophosphatase.